Here is a 429-residue protein sequence, read N- to C-terminus: Enolase 2 (429 aa).

Q163 serves as a coordination point for (2R)-2-phosphoglycerate. The Proton donor role is filled by E205. D242, E286, and D313 together coordinate Mg(2+). Residues K338, R367, S368, and K389 each contribute to the (2R)-2-phosphoglycerate site. K338 functions as the Proton acceptor in the catalytic mechanism.

The protein belongs to the enolase family. It depends on Mg(2+) as a cofactor.

The protein resides in the cytoplasm. It localises to the secreted. The protein localises to the cell surface. The enzyme catalyses (2R)-2-phosphoglycerate = phosphoenolpyruvate + H2O. It participates in carbohydrate degradation; glycolysis; pyruvate from D-glyceraldehyde 3-phosphate: step 4/5. In terms of biological role, catalyzes the reversible conversion of 2-phosphoglycerate (2-PG) into phosphoenolpyruvate (PEP). It is essential for the degradation of carbohydrates via glycolysis. The chain is Enolase 2 from Lactiplantibacillus plantarum (strain ATCC BAA-793 / NCIMB 8826 / WCFS1) (Lactobacillus plantarum).